A 238-amino-acid chain; its full sequence is C-type lectin domain family 4 member A (238 aa).

Residues 1–48 (MASEITYAEVKFKNESNSLHTYSESPAAPREKPIRDLRKPGSPSLLLT) are Cytoplasmic-facing. An ITIM motif motif is present at residues 5–10 (ITYAEV). Residues 49 to 69 (SLMLLLLLLAITFLVAFIIYF) form a helical; Signal-anchor for type II membrane protein membrane-spanning segment. At 70-238 (QKYSQLLEEK…SVCQMKKINL (169 aa)) the chain is on the extracellular side. Asn-91 carries N-linked (GlcNAc...) asparagine glycosylation. A disulfide bond links Cys-107 and Cys-118. The C-type lectin domain maps to 126 to 233 (SSASWNKSEE…SLKQKSVCQM (108 aa)). N-linked (GlcNAc...) asparagine glycosylation is found at Asn-131 and Asn-136. Cystine bridges form between Cys-137/Cys-231 and Cys-205/Cys-223. Ca(2+) is bound by residues Val-146, Glu-152, Glu-197, Ser-199, and Glu-203. Alpha-D-mannopyranose contacts are provided by residues 197–199 (EPS) and Glu-203. N-acetyl-D-glucosamine is bound at residue 209 to 211 (IYR). Ca(2+) contacts are provided by Asn-219 and Asp-220.

As to quaternary structure, may interact with PTPN6 via its ITIM site. In terms of tissue distribution, expressed in splenic antigen-presenting cells including B-cells, monocytes/macrophages, and dendritic cells (at protein level). Expressed in spleen and lymph node and slightly increased with dendritic cell maturation.

Its subcellular location is the cell membrane. In terms of biological role, may be involved in regulating immune reactivity. May play a role in modulating dendritic cells (DC) differentiation and/or maturation. May be involved in the inhibition of B-cell-receptor-mediated calcium mobilization and protein tyrosine phosphorylation. Its function is as follows. C-type lectin receptor that binds carbohydrates mannose and fucose but also weakly interacts with N-acetylglucosamine (GlcNAc) in a Ca(2+)-dependent manner. Involved in regulating immune reactivity. Once triggered by antigen, it is internalized by clathrin-dependent endocytosis and delivers its antigenic cargo into the antigen presentation pathway resulting in cross-priming of CD8(+) T cells. This cross-presentation and cross-priming are enhanced by TLR7 and TLR8 agonists with increased expansion of the CD8(+) T cells, high production of IFNG and TNF with reduced levels of IL4, IL5 and IL13. In plasmacytoid dendritic cells, inhibits TLR9-mediated IFNA and TNF production. May be involved via its ITIM motif (immunoreceptor tyrosine-based inhibitory motifs) in the inhibition of B-cell-receptor-mediated calcium mobilization and protein tyrosine phosphorylation. The polypeptide is C-type lectin domain family 4 member A (Clec4a) (Mus musculus (Mouse)).